The chain runs to 290 residues: Fructose-1,6-bisphosphatase class 1 (290 aa).

Positions 78, 96, 98, and 99 each coordinate Mg(2+). Substrate contacts are provided by residues 99 to 102, Y201, and K226; that span reads DGSS. A Mg(2+)-binding site is contributed by E232.

This sequence belongs to the FBPase class 1 family. Homotetramer. Mg(2+) serves as cofactor.

The protein localises to the cytoplasm. The enzyme catalyses beta-D-fructose 1,6-bisphosphate + H2O = beta-D-fructose 6-phosphate + phosphate. The protein operates within carbohydrate biosynthesis; gluconeogenesis. The sequence is that of Fructose-1,6-bisphosphatase class 1 from Helicobacter acinonychis (strain Sheeba).